An 88-amino-acid polypeptide reads, in one-letter code: MQVLVRDNNVDQALRALKKKMQREGIFREMKMRGHYEKPSEKRAREKAEAVRRARKLARKRAQREGLLPMTPRPVAAGGAAGAARPPR.

The tract at residues 58 to 88 (ARKRAQREGLLPMTPRPVAAGGAAGAARPPR) is disordered. Over residues 73–88 (RPVAAGGAAGAARPPR) the composition is skewed to low complexity.

The protein belongs to the bacterial ribosomal protein bS21 family.

The chain is Small ribosomal subunit protein bS21 from Mesorhizobium japonicum (strain LMG 29417 / CECT 9101 / MAFF 303099) (Mesorhizobium loti (strain MAFF 303099)).